The following is a 223-amino-acid chain: Cytidylate kinase (223 aa).

12-20 (GPAGSGKST) serves as a coordination point for ATP.

This sequence belongs to the cytidylate kinase family. Type 1 subfamily.

It is found in the cytoplasm. It catalyses the reaction CMP + ATP = CDP + ADP. The catalysed reaction is dCMP + ATP = dCDP + ADP. This is Cytidylate kinase from Aster yellows witches'-broom phytoplasma (strain AYWB).